The sequence spans 105 residues: Large ribosomal subunit protein eL36 (105 aa).

The interval 1–36 is disordered; that stretch reads MAQERSGIAVGLNKGHKTTPLNTPKTRISRSKGKAS. Residues 27–36 are compositionally biased toward basic residues; that stretch reads RISRSKGKAS.

It belongs to the eukaryotic ribosomal protein eL36 family. As to quaternary structure, component of the large ribosomal subunit (LSU).

It localises to the cytoplasm. Its function is as follows. Component of the ribosome, a large ribonucleoprotein complex responsible for the synthesis of proteins in the cell. The small ribosomal subunit (SSU) binds messenger RNAs (mRNAs) and translates the encoded message by selecting cognate aminoacyl-transfer RNA (tRNA) molecules. The large subunit (LSU) contains the ribosomal catalytic site termed the peptidyl transferase center (PTC), which catalyzes the formation of peptide bonds, thereby polymerizing the amino acids delivered by tRNAs into a polypeptide chain. The nascent polypeptides leave the ribosome through a tunnel in the LSU and interact with protein factors that function in enzymatic processing, targeting, and the membrane insertion of nascent chains at the exit of the ribosomal tunnel. The polypeptide is Large ribosomal subunit protein eL36 (Emericella nidulans (strain FGSC A4 / ATCC 38163 / CBS 112.46 / NRRL 194 / M139) (Aspergillus nidulans)).